Consider the following 591-residue polypeptide: MDQYEVLEQIGKGAFGSALLVRHKLEKKKYVLKKIRLARQTDRTRRSAHQEMQLIATVRNPFIVEYKDSWVEKGCYVCIVIGYCEGGDMAEAIKRANGTYFSEEKLCKWLVQLLMALDYLHANHILHRDVKCSNIFIARDQSIRLGDFGLAKILTSDDLASSVVGTPSYMCPELLADIPYGTKSDIWSLGCCIYEMTALRPAFKAFDMQALINKITKSIVSPLPTKYSGAFRGLIKSMLRKSPEHRPSAAQLLKHPQLQPYVLQVQLKSSPTRNILPIHQSLTDKVKKMTFPSDVVDSARRRMARRNSLGNERTVTFSKPSPERNSVSSTRSIKEYTTTQSVKGLSVDSSEAGDEVTSKAIITKTSSILRTPKSLPAKTYTARNQLEPPKTSYNRTYRSELPSKTTPNKIARPARRASLPLSTYETPTKRSISILEQLDSPDVSVNAPRIDRIAEFPLASSEDPLLPIHNKLSPGHGSCSTPPFINRSITKDKCTIQVLRTDGDNGSDSSGRNATAASSRGSNDSRQQRFDTSSFQQRAEALEGLLEFSAQLLQQERYEELGILLKPFGPEKASPRETAIWLTKSFKETAS.

Residues 4 to 258 (YEVLEQIGKG…AAQLLKHPQL (255 aa)) enclose the Protein kinase domain. ATP is bound by residues 10 to 18 (IGKGAFGSA) and Lys-33. Asp-129 serves as the catalytic Proton acceptor. Disordered regions lie at residues 309-331 (LGNE…SSTR), 382-408 (ARNQ…TTPN), and 500-534 (RTDG…DTSS). 2 stretches are compositionally biased toward polar residues: residues 391–408 (TSYN…TTPN) and 504–534 (DNGS…DTSS).

The protein belongs to the protein kinase superfamily. NEK Ser/Thr protein kinase family. NIMA subfamily. In terms of tissue distribution, expressed in anthers, pistils and leaves.

It carries out the reaction L-seryl-[protein] + ATP = O-phospho-L-seryl-[protein] + ADP + H(+). The enzyme catalyses L-threonyl-[protein] + ATP = O-phospho-L-threonyl-[protein] + ADP + H(+). Functionally, may be involved in plant development processes. This is Serine/threonine-protein kinase Nek2 from Oryza sativa subsp. japonica (Rice).